A 388-amino-acid polypeptide reads, in one-letter code: Calreticulin (388 aa).

Positions 1–17 (MQLSLLVGLVCFSAINA) are cleaved as a signal peptide. Residues Cys-103 and Cys-135 are joined by a disulfide bond. 4 residues coordinate an alpha-D-glucoside: Tyr-107, Lys-109, Tyr-126, and Asp-133. 7 repeat units span residues 189–200 (AESGELEADWDF), 208–219 (DPDAKKPEDWDE), 225–236 (DEDDKKPEDWDK), 242–253 (DPDAKKPEDWDD), 257–267 (GEWEPPMVDNP), 271–281 (GEWKPKQKKNP), and 285–295 (GKWIHPEIEIP). Residues 189–253 (AESGELEADW…DAKKPEDWDD (65 aa)) are 4 X approximate repeats. The disordered stretch occupies residues 193–282 (ELEADWDFLP…WKPKQKKNPA (90 aa)). Basic and acidic residues predominate over residues 205-215 (KIKDPDAKKPE). Residues 216–227 (DWDEREFIDDED) are compositionally biased toward acidic residues. Over residues 228-249 (DKKPEDWDKPEHIPDPDAKKPE) the composition is skewed to basic and acidic residues. Positions 250–259 (DWDDEMDGEW) are enriched in acidic residues. The tract at residues 257 to 295 (GEWEPPMVDNPEYKGEWKPKQKKNPAYKGKWIHPEIEIP) is 3 X approximate repeats. Asp-315 serves as a coordination point for an alpha-D-glucoside. A disordered region spans residues 349–388 (REGEKKKGKKTKKQKKKEKNEKIKKEKMKKRKRANRKKKK). 2 stretches are compositionally biased toward basic residues: residues 354–365 (KKGKKTKKQKKK) and 373–388 (KEKM…KKKK).

Belongs to the calreticulin family.

It localises to the endoplasmic reticulum lumen. In terms of biological role, molecular calcium-binding chaperone promoting folding, oligomeric assembly and quality control in the ER via the calreticulin/calnexin cycle. This lectin may interact transiently with almost all of the monoglucosylated glycoproteins that are synthesized in the ER. This is Calreticulin (crt-1) from Onchocerca volvulus.